Consider the following 306-residue polypeptide: tRNA dimethylallyltransferase 2 (306 aa).

11 to 18 (GPTASGKT) provides a ligand contact to ATP. 13–18 (TASGKT) lines the substrate pocket. Positions 36–39 (DSRQ) are interaction with substrate tRNA.

It belongs to the IPP transferase family. Monomer. It depends on Mg(2+) as a cofactor.

It catalyses the reaction adenosine(37) in tRNA + dimethylallyl diphosphate = N(6)-dimethylallyladenosine(37) in tRNA + diphosphate. Its function is as follows. Catalyzes the transfer of a dimethylallyl group onto the adenine at position 37 in tRNAs that read codons beginning with uridine, leading to the formation of N6-(dimethylallyl)adenosine (i(6)A). The chain is tRNA dimethylallyltransferase 2 from Bacteroides thetaiotaomicron (strain ATCC 29148 / DSM 2079 / JCM 5827 / CCUG 10774 / NCTC 10582 / VPI-5482 / E50).